Consider the following 570-residue polypeptide: Mitogen-activated protein kinase 11 (570 aa).

In terms of domain architecture, Protein kinase spans 26-317 (YEVLEVIGKG…AQEALADPYF (292 aa)). ATP contacts are provided by residues 32–40 (IGKGSYGLV) and K55. D152 serves as the catalytic Proton acceptor. Phosphothreonine is present on T188. Residues 188–190 (TDY) carry the TXY motif. Residue Y190 is modified to Phosphotyrosine.

This sequence belongs to the protein kinase superfamily. CMGC Ser/Thr protein kinase family. MAP kinase subfamily. Post-translationally, dually phosphorylated on Thr-188 and Tyr-190, which activates the enzyme.

The catalysed reaction is L-seryl-[protein] + ATP = O-phospho-L-seryl-[protein] + ADP + H(+). It carries out the reaction L-threonyl-[protein] + ATP = O-phospho-L-threonyl-[protein] + ADP + H(+). Its activity is regulated as follows. Activated by threonine and tyrosine phosphorylation. The polypeptide is Mitogen-activated protein kinase 11 (MPK11) (Oryza sativa subsp. japonica (Rice)).